Here is a 224-residue protein sequence, read N- to C-terminus: Thymidine kinase (224 aa).

ATP-binding positions include Gly-19–Thr-26 and Asp-93–Gln-96. Glu-94 serves as the catalytic Proton acceptor. Positions 150, 153, 188, and 191 each coordinate Zn(2+).

Belongs to the thymidine kinase family. As to quaternary structure, homotetramer.

Its subcellular location is the cytoplasm. The enzyme catalyses thymidine + ATP = dTMP + ADP + H(+). In Mycoplasmoides gallisepticum (strain R(low / passage 15 / clone 2)) (Mycoplasma gallisepticum), this protein is Thymidine kinase.